Here is a 147-residue protein sequence, read N- to C-terminus: MAESDWDTVTVLRKKGPTAAQAKSKQAITAAQRRGEEVETSKKWSAGQNKQHTITRNTAKLDRETEELHHDRVPLEVGKVIQQGRQGKGMTQKDLATKINEKPQVIADYECGKAIPNNQVMGKIERVIGLKLRGKDIGKPMDPGPKK.

The segment at 1 to 69 (MAESDWDTVT…KLDRETEELH (69 aa)) is disordered. A compositionally biased stretch (basic and acidic residues) spans 33–42 (RRGEEVETSK). Over residues 46 to 58 (AGQNKQHTITRNT) the composition is skewed to polar residues. The segment covering 59–69 (AKLDRETEELH) has biased composition (basic and acidic residues). Residues 81–135 (IQQGRQGKGMTQKDLATKINEKPQVIADYECGKAIPNNQVMGKIERVIGLKLRGK) enclose the HTH cro/C1-type domain. The segment at residues 92–111 (QKDLATKINEKPQVIADYEC) is a DNA-binding region (H-T-H motif).

The protein localises to the nucleus. Its function is as follows. Probable transcriptional coactivator. The sequence is that of Endothelial differentiation-related factor 1 homolog (edf1) from Xenopus laevis (African clawed frog).